A 30-amino-acid polypeptide reads, in one-letter code: Trypsin inhibitor 4 (30 aa).

3 cysteine pairs are disulfide-bonded: Cys-3–Cys-20, Cys-10–Cys-22, and Cys-16–Cys-28.

It belongs to the protease inhibitor I7 (squash-type serine protease inhibitor) family.

It localises to the secreted. Inhibits trypsin; probably participates in a plant defense mechanism. The polypeptide is Trypsin inhibitor 4 (Momordica charantia (Bitter gourd)).